Here is a 305-residue protein sequence, read N- to C-terminus: Protein ORANGE, chloroplastic (305 aa).

A chloroplast-targeting transit peptide spans 1-54 (MSCLGRILSVSYPPDPYGSRLSVSKLSSPGRNRRLRWRFTALDSDSSSLDSDSS). Helical transmembrane passes span 144 to 164 (VYYA…GLLA) and 197 to 217 (IVAS…VVEV). The tract at residues 206–297 (VGVISALMVV…CTGMAMASEH (92 aa)) is CR-type-like. One copy of the CXXCXGXG motif repeat lies at 228–235 (CKYCLGTG). A CXXCXXXG motif repeat occupies 239–246 (CARCSSTG). The CXXCXGXG motif repeat unit spans residues 272 to 279 (CSNCSGAG). A CXXCXXXG motif repeat occupies 283–290 (CPTCLCTG).

This sequence belongs to the orange-like family. As to quaternary structure, interacts with ERF1-2. As to expression, expressed in young leaves, curds and flower buds.

Its subcellular location is the plastid. It localises to the chloroplast membrane. The protein localises to the nucleus. Its function is as follows. Involved in chromoplast differentiation. Is associated with a cellular process that triggers the differentiation of pro-plastids or other non-colored plastids into chromoplasts for carotenoid accumulation. Associated with carotenoid accumulation in de-etiolated cotyledons. Controls leaf petiole elongation by suppressing the expression of ERF1 genes. The chain is Protein ORANGE, chloroplastic from Brassica oleracea var. botrytis (Cauliflower).